The primary structure comprises 219 residues: Orotate phosphoribosyltransferase (219 aa).

Residue Lys-26 participates in 5-phospho-alpha-D-ribose 1-diphosphate binding. 34–35 (FF) serves as a coordination point for orotate. Residues 72–73 (YK), Arg-98, Lys-99, Lys-102, His-104, and 124–132 (DDVITAGTA) contribute to the 5-phospho-alpha-D-ribose 1-diphosphate site. The orotate site is built by Thr-128 and Arg-156.

It belongs to the purine/pyrimidine phosphoribosyltransferase family. PyrE subfamily. Homodimer. Mg(2+) serves as cofactor.

The enzyme catalyses orotidine 5'-phosphate + diphosphate = orotate + 5-phospho-alpha-D-ribose 1-diphosphate. Its pathway is pyrimidine metabolism; UMP biosynthesis via de novo pathway; UMP from orotate: step 1/2. Its function is as follows. Catalyzes the transfer of a ribosyl phosphate group from 5-phosphoribose 1-diphosphate to orotate, leading to the formation of orotidine monophosphate (OMP). The chain is Orotate phosphoribosyltransferase from Xylella fastidiosa (strain 9a5c).